Here is a 70-residue protein sequence, read N- to C-terminus: Waprin-Thr1 (70 aa).

An N-terminal signal peptide occupies residues 1–19 (MKARLLLLSVVILVGMVSA). One can recognise a WAP domain in the interval 20–70 (ENEKAGSCPDVNQPIPPLGLCRNMCESDSGCPNNEKCCKNGCGFMTCSRPR). 4 disulfide bridges follow: Cys27/Cys57, Cys40/Cys61, Cys44/Cys56, and Cys50/Cys66.

This sequence belongs to the venom waprin family. Expressed by the venom gland.

It localises to the secreted. In terms of biological role, damages membranes of susceptible bacteria. Has no hemolytic activity. Not toxic to mice. Does not inhibit the proteinases elastase and cathepsin G. This Thrasops jacksonii (Jackson's black tree snake) protein is Waprin-Thr1.